The following is a 362-amino-acid chain: uncharacterized protein (362 aa).

Basic and acidic residues predominate over residues 314-323; that stretch reads GEEKEPKQES. The interval 314 to 362 is disordered; that stretch reads GEEKEPKQESQEQLFNPFTIDEMLTEEQQQQQEEENNATEEEGDTVKLG. The span at 345–356 shows a compositional bias: acidic residues; sequence QEEENNATEEEG.

This is an uncharacterized protein from Acidianus two-tailed virus (ATV).